A 294-amino-acid polypeptide reads, in one-letter code: ATP phosphoribosyltransferase (294 aa).

Belongs to the ATP phosphoribosyltransferase family. Long subfamily. Mg(2+) is required as a cofactor.

It localises to the cytoplasm. It catalyses the reaction 1-(5-phospho-beta-D-ribosyl)-ATP + diphosphate = 5-phospho-alpha-D-ribose 1-diphosphate + ATP. It functions in the pathway amino-acid biosynthesis; L-histidine biosynthesis; L-histidine from 5-phospho-alpha-D-ribose 1-diphosphate: step 1/9. Feedback inhibited by histidine. Its function is as follows. Catalyzes the condensation of ATP and 5-phosphoribose 1-diphosphate to form N'-(5'-phosphoribosyl)-ATP (PR-ATP). Has a crucial role in the pathway because the rate of histidine biosynthesis seems to be controlled primarily by regulation of HisG enzymatic activity. The protein is ATP phosphoribosyltransferase of Chlorobium phaeovibrioides (strain DSM 265 / 1930) (Prosthecochloris vibrioformis (strain DSM 265)).